Here is a 302-residue protein sequence, read N- to C-terminus: MTLPPLSHLDRLEAESIHILREVAAEFRAPVMLYSVGKDSSVLLHLLLKAFAPSPPPIPLLHVDTRWKFREMIAFRDRRAAETAVDLRVHINPEGVAQDIGPISHGAAVHTDVMKTQGLKQALEQGGFDAAIGGARRDEEKSRAKERVFSFRNARHRWDPKNQRPELWNLYNARTKPGESVRVFPLSNWTELDIWLYIYRERIPVVPLYFAAPRPVVQRDGAWIMVDDDRLPLHPGETPQLRSVRFRTLGCYPLTGAIESTADTLEAVIAEMLVSTSSERQGRMIDHAPGASMEQKKLEGYF.

Belongs to the PAPS reductase family. CysD subfamily. Heterodimer composed of CysD, the smaller subunit, and CysN.

The catalysed reaction is sulfate + ATP + H(+) = adenosine 5'-phosphosulfate + diphosphate. The protein operates within sulfur metabolism; hydrogen sulfide biosynthesis; sulfite from sulfate: step 1/3. In terms of biological role, with CysN forms the ATP sulfurylase (ATPS) that catalyzes the adenylation of sulfate producing adenosine 5'-phosphosulfate (APS) and diphosphate, the first enzymatic step in sulfur assimilation pathway. APS synthesis involves the formation of a high-energy phosphoric-sulfuric acid anhydride bond driven by GTP hydrolysis by CysN coupled to ATP hydrolysis by CysD. This chain is Sulfate adenylyltransferase subunit 2, found in Xanthomonas campestris pv. campestris (strain 8004).